The primary structure comprises 332 residues: Ubiquinone biosynthesis protein COQ4, mitochondrial (332 aa).

The N-terminal 24 residues, M1 to F24, are a transit peptide targeting the mitochondrion. Residues H210, D211, H214, and E226 each coordinate Zn(2+).

Belongs to the COQ4 family. In terms of assembly, component of a multi-subunit COQ enzyme complex, composed of at least COQ3, COQ4, COQ5, COQ6, COQ7 and COQ9. Requires Zn(2+) as cofactor.

The protein localises to the mitochondrion inner membrane. It catalyses the reaction a 4-hydroxy-3-methoxy-5-(all-trans-polyprenyl)benzoate + H(+) = a 2-methoxy-6-(all-trans-polyprenyl)phenol + CO2. The protein operates within cofactor biosynthesis; ubiquinone biosynthesis. Lyase that catalyzes the C1-decarboxylation of 4-hydroxy-3-methoxy-5-(all-trans-polyprenyl)benzoic acid into 2-methoxy-6-(all-trans-polyprenyl)phenol during ubiquinone biosynthesis. This chain is Ubiquinone biosynthesis protein COQ4, mitochondrial, found in Zygosaccharomyces rouxii (strain ATCC 2623 / CBS 732 / NBRC 1130 / NCYC 568 / NRRL Y-229).